Reading from the N-terminus, the 184-residue chain is Major urinary protein 3 (184 aa).

Residues 1–22 (MKLLLPLLLLLCLELTLVCIHA) form the signal peptide. A glycan (N-linked (GlcNAc...) asparagine) is linked at N66. A disulfide bond links C86 and C179.

The protein belongs to the calycin superfamily. Lipocalin family. In terms of processing, glycosylated. Abundant in the urine of adult male mice but absent from that of females.

Its subcellular location is the secreted. In terms of biological role, binds pheromones that are released from drying urine of males. These pheromones affect the sexual behavior of females. This is Major urinary protein 3 (Mup3) from Mus musculus (Mouse).